The sequence spans 321 residues: Probable UDP-sugar transporter protein SLC35A4 (321 aa).

At 1–22 (MYSVNIEPDGSNHSPSRKRLKQ) the chain is on the cytoplasmic side. A helical transmembrane segment spans residues 23 to 43 (ILWGLMLVLSVTIYGSHAPLI). Over 44–56 (YLCKVNGEIPFSS) the chain is Lumenal. A helical transmembrane segment spans residues 57–77 (SAVVLLIELSKFVISLVFFLI). Residues 78–91 (QDWKSLKASVSWHL) lie on the Cytoplasmic side of the membrane. A helical transmembrane segment spans residues 92–112 (AAPYAVPAVLYGANNNLVVYI). The Lumenal portion of the chain corresponds to 113–119 (QHFMDPS). A helical transmembrane segment spans residues 120–140 (SFQVLSNLKIVSTAVLYSLFL). The Cytoplasmic segment spans residues 141–149 (RQRLSVRRW). The chain crosses the membrane as a helical span at residues 150–170 (LSVFLLLAAGVFYSYGGIQDL). Residues 171–180 (EKVSSDTNLY) are Lumenal-facing. The helical transmembrane segment at 181 to 201 (VTLPGLLLMLAYCLISGLSAV) threads the bilayer. Over 202 to 211 (YTEMTLKTQK) the chain is Cytoplasmic. The chain crosses the membrane as a helical span at residues 212 to 232 (IPLNMQNLYLYSFGIIINLTA). Residues 233–247 (HLTSSKNSDFFDGFS) lie on the Lumenal side of the membrane. The chain crosses the membrane as a helical span at residues 248–268 (VWVWVIILSQALNGLIMSLVM). Residues 269-321 (KLSNNITRLFIISFSMLANGFLSFILFQLQLTALFFLAVVLIGLAVYMYYGMK) lie on the Cytoplasmic side of the membrane.

This sequence belongs to the nucleotide-sugar transporter family. SLC35A subfamily.

It is found in the golgi apparatus membrane. It carries out the reaction CDP-L-ribitol(in) + CDP(out) = CDP-L-ribitol(out) + CDP(in). In terms of biological role, mediates the transport of CDP-ribitol. Does not exhibit CMP-sialic acid, UDP-galactose and UDP-N-acetylglucosamine transport activity. The chain is Probable UDP-sugar transporter protein SLC35A4 from Xenopus tropicalis (Western clawed frog).